Consider the following 125-residue polypeptide: Cyclin-dependent protein kinase inhibitor SMR16 (125 aa).

Its function is as follows. Probable cyclin-dependent protein kinase (CDK) inhibitor that functions as a repressor of mitosis in the endoreduplication cell cycle. The chain is Cyclin-dependent protein kinase inhibitor SMR16 from Arabidopsis thaliana (Mouse-ear cress).